The chain runs to 219 residues: Probable GTP-binding protein EngB (219 aa).

In terms of domain architecture, EngB-type G spans 33 to 217; it reads GPLEIAFAGR…RAAICETVGH (185 aa). GTP contacts are provided by residues 41-48, 68-72, 95-98, 162-165, and 196-198; these read GRSNVGKS, GRTQE, DMPG, TKTD, and TSS. Ser-48 and Thr-70 together coordinate Mg(2+).

This sequence belongs to the TRAFAC class TrmE-Era-EngA-EngB-Septin-like GTPase superfamily. EngB GTPase family. Requires Mg(2+) as cofactor.

Functionally, necessary for normal cell division and for the maintenance of normal septation. The polypeptide is Probable GTP-binding protein EngB (Allorhizobium ampelinum (strain ATCC BAA-846 / DSM 112012 / S4) (Agrobacterium vitis (strain S4))).